Here is a 185-residue protein sequence, read N- to C-terminus: Putative 3-methyladenine DNA glycosylase (185 aa).

This sequence belongs to the DNA glycosylase MPG family.

The protein is Putative 3-methyladenine DNA glycosylase of Rhizobium meliloti (strain 1021) (Ensifer meliloti).